The primary structure comprises 378 residues: Pulmonary surfactant-associated protein D (378 aa).

The N-terminal stretch at 1 to 20 is a signal peptide; the sequence is MLLLPLSVLILLTQPPRSLG. 2 positions are modified to S-nitrosocysteine: C35 and C40. Residues 43-221 form a disordered region; that stretch reads MENGLPGRDG…ERGAKGESGL (179 aa). The 177-residue stretch at 46–222 folds into the Collagen-like domain; that stretch reads GLPGRDGRDG…RGAKGESGLP (177 aa). Over residues 50 to 65 the composition is skewed to basic and acidic residues; that stretch reads RDGRDGREGPRGEKGD. Residue P78 is modified to 4-hydroxyproline. K87 is modified (5-hydroxylysine). A glycan (N-linked (GlcNAc...) asparagine) is linked at N90. 4-hydroxyproline is present on P96. K99 carries the 5-hydroxylysine modification. Over residues 105 to 114 the composition is skewed to pro residues; it reads CGPPGPPGIP. The span at 137-146 shows a compositional bias: low complexity; sequence PKGETGPKGE. Residues P171 and P177 each carry the 4-hydroxyproline modification. The segment covering 173–197 has biased composition (low complexity); it reads ERGAPGSAGAAGPAGATGPQGPSGA. The span at 204-216 shows a compositional bias: basic and acidic residues; it reads KGDRGPPGERGAK. A coiled-coil region spans residues 223 to 254; it reads GITALRQQVETLQGQVQRLQKAFSQYKKVELF. Positions 260–378 constitute a C-type lectin domain; it reads VGEKIFKTGG…GELRLVICEF (119 aa). Cystine bridges form between C281/C376 and C354/C368. N323 carries an N-linked (GlcNAc...) asparagine glycan.

It belongs to the SFTPD family. As to quaternary structure, oligomeric complex of 4 set of homotrimers. Post-translationally, hydroxylation on proline residues within the sequence motif, GXPG, is most likely to be 4-hydroxy as this fits the requirement for 4-hydroxylation in vertebrates. In terms of processing, S-nitrosylation at Cys-35 and Cys-40 alters the quaternary structure which results in a pro-inflammatory chemoattractive signaling activity with macrophages.

It is found in the secreted. Its subcellular location is the extracellular space. The protein resides in the extracellular matrix. It localises to the surface film. Functionally, contributes to the lung's defense against inhaled microorganisms, organic antigens and toxins. Interacts with compounds such as bacterial lipopolysaccharides, oligosaccharides and fatty acids and modulates leukocyte action in immune response. May participate in the extracellular reorganization or turnover of pulmonary surfactant. Binds strongly maltose residues and to a lesser extent other alpha-glucosyl moieties. The polypeptide is Pulmonary surfactant-associated protein D (SFTPD) (Sus scrofa (Pig)).